Reading from the N-terminus, the 349-residue chain is MSKIRVLSVDDSALMRQIMTEIINSHSDMEMVATAPDPLVARDLIKKFNPDVLTLDVEMPRMDGLDFLEKLMRLRPMPVVMVSSLTGKGSEVTLRALELGAIDFVTKPQLGIREGMLAYSEMIAEKVRTAARARIAAHKPMAAPTTLKAGPLLSSEKLIAIGASTGGTEAIRHVLQPLPLSSPAVIITQHMPPGFTRSFAERLNKLCQISVKEAEDGERVLPGHAYIAPGDKHMELARSGANYQIKIHDGPPVNRHRPSVDVLFHSVAKHAGRNAVGVILTGMGNDGAAGMLAMYQAGAWTIAQNEASCVVFGMPREAINMGGVSEVVDLSQVSQQMLAKISAGQAIRI.

In terms of domain architecture, Response regulatory spans 5–122 (RVLSVDDSAL…REGMLAYSEM (118 aa)). Position 56 is a 4-aspartylphosphate (Asp56). Positions 152–344 (LLSSEKLIAI…QQMLAKISAG (193 aa)) constitute a CheB-type methylesterase domain. Residues Ser164, His190, and Asp286 contribute to the active site.

This sequence belongs to the CheB family. Post-translationally, phosphorylated by CheA. Phosphorylation of the N-terminal regulatory domain activates the methylesterase activity.

The protein localises to the cytoplasm. The enzyme catalyses [protein]-L-glutamate 5-O-methyl ester + H2O = L-glutamyl-[protein] + methanol + H(+). It catalyses the reaction L-glutaminyl-[protein] + H2O = L-glutamyl-[protein] + NH4(+). In terms of biological role, involved in chemotaxis. Part of a chemotaxis signal transduction system that modulates chemotaxis in response to various stimuli. Catalyzes the demethylation of specific methylglutamate residues introduced into the chemoreceptors (methyl-accepting chemotaxis proteins or MCP) by CheR. Also mediates the irreversible deamidation of specific glutamine residues to glutamic acid. The protein is Protein-glutamate methylesterase/protein-glutamine glutaminase of Salmonella paratyphi A (strain ATCC 9150 / SARB42).